Here is a 204-residue protein sequence, read N- to C-terminus: MASDYFDIAIALAGVCQAAKLVQQFAHNGEADLNALETSLYSLLQTEPENIAAVYRGSLANIKLGLETLIEQLNAMDTELARYWLGILALSGKLTKSADAKNALASRMQYLPAQLEHYGLCSDMTFEKMATIYTDIISPLGKKIHVIGSSLYLQQPSMHNRIRACLLAGIRSAILWQQVGGTKWQILFSRRKILKAAKHIYETI.

The protein belongs to the HflD family.

The protein localises to the cytoplasm. It is found in the cell inner membrane. This chain is High frequency lysogenization protein HflD homolog, found in Actinobacillus succinogenes (strain ATCC 55618 / DSM 22257 / CCUG 43843 / 130Z).